Here is a 345-residue protein sequence, read N- to C-terminus: Ferrochelatase (345 aa).

Fe cation is bound by residues histidine 192 and glutamate 295.

It belongs to the ferrochelatase family.

The protein resides in the cytoplasm. It catalyses the reaction heme b + 2 H(+) = protoporphyrin IX + Fe(2+). Its pathway is porphyrin-containing compound metabolism; protoheme biosynthesis; protoheme from protoporphyrin-IX: step 1/1. Functionally, catalyzes the ferrous insertion into protoporphyrin IX. This Opitutus terrae (strain DSM 11246 / JCM 15787 / PB90-1) protein is Ferrochelatase.